The chain runs to 301 residues: MIYLHAIDPIAFSLGPVKVHWYGLMYLAGFGAAWCLGRQRIQAGRLLGVNIDGFSDLLFYAMMGVVLGGRVGYMLFYAFHDFLQEPLLLFRVWEGGMSFHGGLIGVLLAVAWWSRRQRMHMFDVVDFCAPLVPVGLGFGRLGNFIGGELWGKLTHNGWGVIFPRAPLSDVPAGQLAMQDVINFVQIQEHYAAGLLGHYARHPSQLYEAFLEGLVMFIVLWLFSRKPRPRYAVSGLFALLYGVFRFLVEFVRMPDNGVYVAFGWLTRGQILSLPLIVIGLFLFWLSCRSPVLQPVPAPEVAK.

4 helical membrane-spanning segments follow: residues 10–30 (IAFS…LAGF), 57–77 (LLFY…MLFY), 92–112 (VWEG…AVAW), and 119–139 (MHMF…LGFG). Residue Arg140 coordinates a 1,2-diacyl-sn-glycero-3-phospho-(1'-sn-glycerol). 3 consecutive transmembrane segments (helical) span residues 202-222 (PSQL…LWLF), 230-250 (YAVS…VEFV), and 264-284 (LTRG…LFWL).

This sequence belongs to the Lgt family.

It localises to the cell inner membrane. It catalyses the reaction L-cysteinyl-[prolipoprotein] + a 1,2-diacyl-sn-glycero-3-phospho-(1'-sn-glycerol) = an S-1,2-diacyl-sn-glyceryl-L-cysteinyl-[prolipoprotein] + sn-glycerol 1-phosphate + H(+). It functions in the pathway protein modification; lipoprotein biosynthesis (diacylglyceryl transfer). Its function is as follows. Catalyzes the transfer of the diacylglyceryl group from phosphatidylglycerol to the sulfhydryl group of the N-terminal cysteine of a prolipoprotein, the first step in the formation of mature lipoproteins. The chain is Phosphatidylglycerol--prolipoprotein diacylglyceryl transferase from Xylella fastidiosa (strain M23).